The sequence spans 3431 residues: KICSTOR complex protein SZT2 (3431 aa).

Disordered stretches follow at residues 699-731 (SKEP…PQQA), 1067-1101 (LRDP…TLPS), and 1162-1231 (KPKL…GADG). The interval 1082–1188 (VAKDRAGNST…ATGTKATESQ (107 aa)) is mediates interaction with the GATOR1 complex. Polar residues-rich tracts occupy residues 1088 to 1101 (GNST…TLPS) and 1182 to 1212 (TKAT…TPSC). S1275 is modified (phosphoserine). The disordered stretch occupies residues 1356–1378 (PPSPGPLSPGPFSSSIEEGPEPR). S1415 is modified (phosphoserine). Disordered regions lie at residues 1512–1534 (YRES…SDAD), 1629–1678 (PPAS…HPGL), 1806–1883 (RAED…PGET), 2113–2148 (PPSL…SDAV), 2450–2512 (TEAG…LEEG), 2735–2756 (ASPP…GGPL), and 2866–2899 (ETCA…DVPP). T1640 bears the Phosphothreonine mark. A compositionally biased stretch (polar residues) spans 1641–1657 (SESSASFPRSPGQPSSL). Residue S1650 is modified to Phosphoserine. Positions 1832–1854 (PLISLPSLSQGGSQPGPSRGLSL) are enriched in low complexity. Over residues 2118–2129 (LSRSQEPISSED) the composition is skewed to polar residues. Residues 2460–2473 (TTDDIVLDRPEDTR) are compositionally biased toward basic and acidic residues. The span at 2739 to 2749 (LSREQGRLSGS) shows a compositional bias: low complexity.

In terms of assembly, part of the KICSTOR complex composed of KPTN, ITFG2, KICS2 and SZT2. SZT2 probably serves as a link between the other three proteins in the KICSTOR complex and may mediate the direct interaction with the GATOR complex via GATOR1. The KICSTOR complex interacts directly with the GATOR1 complex and most probably indirectly with the GATOR2 complex in an amino acid-independent manner. Mostly expressed in brain, spinal cord and lung.

The protein localises to the lysosome membrane. The protein resides in the peroxisome. Its function is as follows. As part of the KICSTOR complex functions in the amino acid-sensing branch of the TORC1 signaling pathway. Recruits, in an amino acid-independent manner, the GATOR1 complex to the lysosomal membranes and allows its interaction with GATOR2 and the RAG GTPases. Functions upstream of the RAG GTPases and is required to negatively regulate mTORC1 signaling in absence of amino acids. In absence of the KICSTOR complex mTORC1 is constitutively localized to the lysosome and activated. The KICSTOR complex is also probably involved in the regulation of mTORC1 by glucose. May play a role in the cellular response to oxidative stress. In Mus musculus (Mouse), this protein is KICSTOR complex protein SZT2.